The following is a 336-amino-acid chain: N-acetyl-gamma-glutamyl-phosphate reductase (336 aa).

Residue C148 is part of the active site.

This sequence belongs to the NAGSA dehydrogenase family. Type 1 subfamily.

It localises to the cytoplasm. The enzyme catalyses N-acetyl-L-glutamate 5-semialdehyde + phosphate + NADP(+) = N-acetyl-L-glutamyl 5-phosphate + NADPH + H(+). It functions in the pathway amino-acid biosynthesis; L-arginine biosynthesis; N(2)-acetyl-L-ornithine from L-glutamate: step 3/4. Catalyzes the NADPH-dependent reduction of N-acetyl-5-glutamyl phosphate to yield N-acetyl-L-glutamate 5-semialdehyde. In Campylobacter curvus (strain 525.92), this protein is N-acetyl-gamma-glutamyl-phosphate reductase.